A 628-amino-acid chain; its full sequence is tRNA uridine 5-carboxymethylaminomethyl modification enzyme MnmG (628 aa).

An FAD-binding site is contributed by 14-19 (GAGHAG). 273–287 (GPRYCPSIEDKVVRF) is a binding site for NAD(+).

This sequence belongs to the MnmG family. In terms of assembly, homodimer. Heterotetramer of two MnmE and two MnmG subunits. Requires FAD as cofactor.

The protein localises to the cytoplasm. Its function is as follows. NAD-binding protein involved in the addition of a carboxymethylaminomethyl (cmnm) group at the wobble position (U34) of certain tRNAs, forming tRNA-cmnm(5)s(2)U34. The chain is tRNA uridine 5-carboxymethylaminomethyl modification enzyme MnmG from Bacillus velezensis (strain DSM 23117 / BGSC 10A6 / LMG 26770 / FZB42) (Bacillus amyloliquefaciens subsp. plantarum).